The following is a 67-amino-acid chain: Conotoxin LeDr192 (67 aa).

An N-terminal signal peptide occupies residues 1-19; it reads MRCFPVFIILLLLIASAPC. A propeptide spanning residues 20–49 is cleaved from the precursor; sequence FDARTKTDDDVPLSPLRDNLKRTIRTRLNI. Position 65 is a threonine amide (Thr-65).

This sequence belongs to the conotoxin T superfamily. In terms of processing, contains 2 disulfide bonds that can be either 'C1-C3, C2-C4' or 'C1-C4, C2-C3', since these disulfide connectivities have been observed for conotoxins with cysteine framework V (for examples, see AC P0DQQ7 and AC P81755). Expressed by the venom duct.

It localises to the secreted. The sequence is that of Conotoxin LeDr192 from Conus litteratus (Lettered cone).